A 275-amino-acid polypeptide reads, in one-letter code: MGIKSFKPTSPGRRQMTVLTFEEVTKDKPEKSLVVTLTKTGGRNVYGRITVRHRGGGHKRKYRIIDFKRDKDGIPGKVAAIEYDPNRTAYIALIHYLDGEKRYIIAPYGLKVGDIIESGENVDIKVGNALPLRNIPVGTIIHNIELIPGKGGQLVRAAGTAAQLMAKEGDYVQVRMPSGEIRLIKADCRATIGQVSNLDHENVKIGKAGRSRWLGIRPTVRGSAMNPVDHPHGGGEGKAPIGHPGPLTPWGKPALGYKTRKKGKASDKFIIRRRK.

The tract at residues 224-275 is disordered; sequence AMNPVDHPHGGGEGKAPIGHPGPLTPWGKPALGYKTRKKGKASDKFIIRRRK. The segment covering 264–275 has biased composition (basic and acidic residues); sequence KASDKFIIRRRK.

This sequence belongs to the universal ribosomal protein uL2 family. Part of the 50S ribosomal subunit. Forms a bridge to the 30S subunit in the 70S ribosome.

Functionally, one of the primary rRNA binding proteins. Required for association of the 30S and 50S subunits to form the 70S ribosome, for tRNA binding and peptide bond formation. It has been suggested to have peptidyltransferase activity; this is somewhat controversial. Makes several contacts with the 16S rRNA in the 70S ribosome. The protein is Large ribosomal subunit protein uL2 of Thermoanaerobacter pseudethanolicus (strain ATCC 33223 / 39E) (Clostridium thermohydrosulfuricum).